A 540-amino-acid chain; its full sequence is Ubiquitin carboxyl-terminal hydrolase 17-like protein E (540 aa).

The tract at residues 1–22 (MVVSLSFPEETGGENLPSAPLE) is disordered. Positions 85–382 (CGLQNTGNSC…NAYVLFYVQQ (298 aa)) constitute a USP domain. Cys-94 serves as the catalytic Nucleophile. The Proton acceptor role is filled by His-341. 2 stretches are compositionally biased toward basic and acidic residues: residues 431 to 441 (NREKRAKKETS) and 508 to 520 (APDK…HNGD). Disordered regions lie at residues 431 to 461 (NREK…QKHG) and 499 to 540 (RSTA…QGGR). The span at 523-540 (LTSQGLMSPGQLCSQGGR) shows a compositional bias: polar residues.

The protein belongs to the peptidase C19 family. USP17 subfamily. Interacts with SUDS3; the interaction is direct.

It localises to the nucleus. Its subcellular location is the endoplasmic reticulum. It catalyses the reaction Thiol-dependent hydrolysis of ester, thioester, amide, peptide and isopeptide bonds formed by the C-terminal Gly of ubiquitin (a 76-residue protein attached to proteins as an intracellular targeting signal).. Its function is as follows. Deubiquitinating enzyme that removes conjugated ubiquitin from specific proteins to regulate different cellular processes that may include cell proliferation, progression through the cell cycle, apoptosis, cell migration, and the cellular response to viral infection. The chain is Ubiquitin carboxyl-terminal hydrolase 17-like protein E (Usp17le) from Mus musculus (Mouse).